The primary structure comprises 450 residues: Glucose-6-phosphate isomerase (450 aa).

The active-site Proton donor is E291. Residues H312 and K426 contribute to the active site.

It belongs to the GPI family.

Its subcellular location is the cytoplasm. The catalysed reaction is alpha-D-glucose 6-phosphate = beta-D-fructose 6-phosphate. Its pathway is carbohydrate biosynthesis; gluconeogenesis. It participates in carbohydrate degradation; glycolysis; D-glyceraldehyde 3-phosphate and glycerone phosphate from D-glucose: step 2/4. Catalyzes the reversible isomerization of glucose-6-phosphate to fructose-6-phosphate. The protein is Glucose-6-phosphate isomerase of Clostridium perfringens (strain ATCC 13124 / DSM 756 / JCM 1290 / NCIMB 6125 / NCTC 8237 / Type A).